The chain runs to 64 residues: UPF0434 protein BAB2_0345 (64 aa).

The protein belongs to the UPF0434 family.

The sequence is that of UPF0434 protein BAB2_0345 from Brucella abortus (strain 2308).